The sequence spans 246 residues: Proteasome subunit alpha type-6 (246 aa).

It belongs to the peptidase T1A family. The 26S proteasome consists of a 20S proteasome core and two 19S regulatory subunits. The 20S proteasome core is composed of 28 subunits that are arranged in four stacked rings, resulting in a barrel-shaped structure. The two end rings are each formed by seven alpha subunits, and the two central rings are each formed by seven beta subunits. The catalytic chamber with the active sites is on the inside of the barrel.

Its subcellular location is the cytoplasm. It localises to the nucleus. Its function is as follows. The proteasome is a multicatalytic proteinase complex which is characterized by its ability to cleave peptides with Arg, Phe, Tyr, Leu, and Glu adjacent to the leaving group at neutral or slightly basic pH. The proteasome has an ATP-dependent proteolytic activity. This Oryza sativa subsp. japonica (Rice) protein is Proteasome subunit alpha type-6 (PAA1).